Reading from the N-terminus, the 294-residue chain is Ribosomal RNA small subunit methyltransferase A (294 aa).

6 residues coordinate S-adenosyl-L-methionine: asparagine 33, leucine 35, glycine 60, glutamate 81, aspartate 106, and asparagine 131.

It belongs to the class I-like SAM-binding methyltransferase superfamily. rRNA adenine N(6)-methyltransferase family. RsmA subfamily.

It is found in the cytoplasm. It carries out the reaction adenosine(1518)/adenosine(1519) in 16S rRNA + 4 S-adenosyl-L-methionine = N(6)-dimethyladenosine(1518)/N(6)-dimethyladenosine(1519) in 16S rRNA + 4 S-adenosyl-L-homocysteine + 4 H(+). Its function is as follows. Specifically dimethylates two adjacent adenosines (A1518 and A1519) in the loop of a conserved hairpin near the 3'-end of 16S rRNA in the 30S particle. May play a critical role in biogenesis of 30S subunits. This chain is Ribosomal RNA small subunit methyltransferase A, found in Lactococcus lactis subsp. lactis (strain IL1403) (Streptococcus lactis).